The chain runs to 150 residues: MKQSTELMTFFKALLEKEHFSSQGEIVEALVNAGFNNINQSKVSRMLSKSGAVRTRNAKQEMLYCLPAELGIPIITSPLKNLVLDIDRNDSMIVIRTSPGAAQLIARLLDSIGKTEGILGNIAGDDTIFTTPTNSKKIQETMNIIKNLFN.

The protein belongs to the ArgR family.

The protein localises to the cytoplasm. It functions in the pathway amino-acid biosynthesis; L-arginine biosynthesis [regulation]. Functionally, regulates arginine biosynthesis genes. This Psychromonas ingrahamii (strain DSM 17664 / CCUG 51855 / 37) protein is Arginine repressor.